A 360-amino-acid polypeptide reads, in one-letter code: NAD(P)H-quinone oxidoreductase subunit 1, chloroplastic (360 aa).

A run of 8 helical transmembrane segments spans residues 27–47, 98–118, 129–149, 165–185, 203–223, 253–273, 297–317, and 340–360; these read IWIFVPIFSLVLGIITGVLVI, FSIGPSIAVISILLSYSIIPF, IGIFLWIAISSIAPIGLLMSG, AAQSISYEIPLTLCVLSISLL, FWGWNLWRQPIGFIIFLISSL, FGLFYVASYLNLLISSLFVTV, IFGTTIGIFITLAKTYLFLFI, and FLLPISLGNLLLTTSFQLFSL.

It belongs to the complex I subunit 1 family. As to quaternary structure, NDH is composed of at least 16 different subunits, 5 of which are encoded in the nucleus.

The protein resides in the plastid. It localises to the chloroplast thylakoid membrane. It catalyses the reaction a plastoquinone + NADH + (n+1) H(+)(in) = a plastoquinol + NAD(+) + n H(+)(out). It carries out the reaction a plastoquinone + NADPH + (n+1) H(+)(in) = a plastoquinol + NADP(+) + n H(+)(out). Its function is as follows. NDH shuttles electrons from NAD(P)H:plastoquinone, via FMN and iron-sulfur (Fe-S) centers, to quinones in the photosynthetic chain and possibly in a chloroplast respiratory chain. The immediate electron acceptor for the enzyme in this species is believed to be plastoquinone. Couples the redox reaction to proton translocation, and thus conserves the redox energy in a proton gradient. In Lobularia maritima (Sweet alyssum), this protein is NAD(P)H-quinone oxidoreductase subunit 1, chloroplastic.